We begin with the raw amino-acid sequence, 447 residues long: Trigger factor (447 aa).

The PPIase FKBP-type domain maps to 188-273; that stretch reads GDKLVIDFEG…VNDIQVAEDF (86 aa).

It belongs to the FKBP-type PPIase family. Tig subfamily.

The protein localises to the cytoplasm. It catalyses the reaction [protein]-peptidylproline (omega=180) = [protein]-peptidylproline (omega=0). Involved in protein export. Acts as a chaperone by maintaining the newly synthesized protein in an open conformation. Functions as a peptidyl-prolyl cis-trans isomerase. The sequence is that of Trigger factor from Wolbachia sp. subsp. Brugia malayi (strain TRS).